Here is a 226-residue protein sequence, read N- to C-terminus: PKHD-type hydroxylase BP3529 (226 aa).

Positions 78 to 178 (KIFPPLFNRY…RISAFFWLQS (101 aa)) constitute a Fe2OG dioxygenase domain. The Fe cation site is built by His96, Asp98, and His159. Position 169 (Arg169) interacts with 2-oxoglutarate.

Fe(2+) serves as cofactor. L-ascorbate is required as a cofactor.

The protein is PKHD-type hydroxylase BP3529 of Bordetella pertussis (strain Tohama I / ATCC BAA-589 / NCTC 13251).